The chain runs to 446 residues: Phosphoglucosamine mutase (446 aa).

Ser101 serves as the catalytic Phosphoserine intermediate. Mg(2+)-binding residues include Ser101, Asp240, Asp242, and Asp244. Residue Ser101 is modified to Phosphoserine.

The protein belongs to the phosphohexose mutase family. Mg(2+) is required as a cofactor. Activated by phosphorylation.

It carries out the reaction alpha-D-glucosamine 1-phosphate = D-glucosamine 6-phosphate. In terms of biological role, catalyzes the conversion of glucosamine-6-phosphate to glucosamine-1-phosphate. This chain is Phosphoglucosamine mutase, found in Pseudomonas putida (strain ATCC 47054 / DSM 6125 / CFBP 8728 / NCIMB 11950 / KT2440).